The chain runs to 414 residues: Transforming growth factor beta-2 proprotein (414 aa).

The N-terminal stretch at 1–20 (MHYCVLSAFLLLHLVTAALS) is a signal peptide. 3 N-linked (GlcNAc...) asparagine glycosylation sites follow: asparagine 72, asparagine 140, and asparagine 241. 4 disulfide bridges follow: cysteine 309-cysteine 318, cysteine 317-cysteine 380, cysteine 346-cysteine 411, and cysteine 350-cysteine 413.

The protein belongs to the TGF-beta family. Interacts with the serine proteases, HTRA1 and HTRA3. Interacts with ASPN. Interacts with MFAP5. As to quaternary structure, interacts with Transforming growth factor beta-2 (TGF-beta-2) chain; interaction is non-covalent and maintains (TGF-beta-2) in a latent state. Interacts with LRRC32/GARP; leading to regulate activation of TGF-beta-2. Interacts with NREP; the interaction results in a decrease in TGFB2 autoinduction. In terms of assembly, transforming growth factor beta-2: Homodimer; disulfide-linked. Transforming growth factor beta-2: Interacts with TGF-beta receptors (TGFBR1 and TGFBR2), leading to signal transduction. The precursor proprotein is cleaved in the Golgi apparatus to form Transforming growth factor beta-2 (TGF-beta-2) and Latency-associated peptide (LAP) chains, which remain non-covalently linked, rendering TGF-beta-2 inactive.

The protein localises to the secreted. It localises to the extracellular space. Its subcellular location is the extracellular matrix. Its function is as follows. Precursor of the Latency-associated peptide (LAP) and Transforming growth factor beta-2 (TGF-beta-2) chains, which constitute the regulatory and active subunit of TGF-beta-2, respectively. Functionally, required to maintain the Transforming growth factor beta-2 (TGF-beta-2) chain in a latent state during storage in extracellular matrix. Associates non-covalently with TGF-beta-2 and regulates its activation via interaction with 'milieu molecules', such as LTBP1 and LRRC32/GARP, that control activation of TGF-beta-2. Multifunctional protein that regulates various processes such as angiogenesis and heart development. Activation into mature form follows different steps: following cleavage of the proprotein in the Golgi apparatus, Latency-associated peptide (LAP) and Transforming growth factor beta-2 (TGF-beta-2) chains remain non-covalently linked rendering TGF-beta-2 inactive during storage in extracellular matrix. At the same time, LAP chain interacts with 'milieu molecules', such as LTBP1 and LRRC32/GARP, that control activation of TGF-beta-2 and maintain it in a latent state during storage in extracellular milieus. Once activated following release of LAP, TGF-beta-2 acts by binding to TGF-beta receptors (TGFBR1 and TGFBR2), which transduce signal. The sequence is that of Transforming growth factor beta-2 proprotein (TGFB2) from Mustela putorius furo (European domestic ferret).